The following is a 194-amino-acid chain: Fe/S biogenesis protein NfuA (194 aa).

[4Fe-4S] cluster is bound by residues Cys151 and Cys154.

The protein belongs to the NfuA family. Homodimer. [4Fe-4S] cluster serves as cofactor.

In terms of biological role, involved in iron-sulfur cluster biogenesis. Binds a 4Fe-4S cluster, can transfer this cluster to apoproteins, and thereby intervenes in the maturation of Fe/S proteins. Could also act as a scaffold/chaperone for damaged Fe/S proteins. The polypeptide is Fe/S biogenesis protein NfuA (Aliivibrio salmonicida (strain LFI1238) (Vibrio salmonicida (strain LFI1238))).